Consider the following 77-residue polypeptide: Short neurotoxin OH-32 (77 aa).

Residues 1–21 (MKNLLLTFLVVTIVCLDLGYT) form the signal peptide. Intrachain disulfides connect Cys-24/Cys-40, Cys-33/Cys-58, Cys-62/Cys-70, and Cys-71/Cys-76.

Belongs to the three-finger toxin family. Short-chain subfamily. As to expression, expressed by the venom gland.

The protein localises to the secreted. Its function is as follows. This three-finger toxin binds and inhibits the nicotinic acetylcholine receptor (nAChR). This chain is Short neurotoxin OH-32, found in Ophiophagus hannah (King cobra).